Consider the following 513-residue polypeptide: Ankyrin repeat-containing protein YIL001W (513 aa).

ANK repeat units follow at residues K8–S37 and F41–R70. BTB domains follow at residues R122–Y179 and P274–W360.

This Saccharomyces cerevisiae (strain ATCC 204508 / S288c) (Baker's yeast) protein is Ankyrin repeat-containing protein YIL001W.